The following is a 292-amino-acid chain: Nitrogenase iron protein 1 (292 aa).

An ATP-binding site is contributed by 12–19; that stretch reads GKGGIGKS. [4Fe-4S] cluster is bound at residue cysteine 101. Residue arginine 104 is modified to ADP-ribosylarginine; by dinitrogenase reductase ADP-ribosyltransferase. [4Fe-4S] cluster is bound at residue cysteine 135.

The protein belongs to the NifH/BchL/ChlL family. In terms of assembly, homodimer. The cofactor is [4Fe-4S] cluster. In terms of processing, the reversible ADP-ribosylation of Arg-104 inactivates the nitrogenase reductase and regulates nitrogenase activity.

The catalysed reaction is N2 + 8 reduced [2Fe-2S]-[ferredoxin] + 16 ATP + 16 H2O = H2 + 8 oxidized [2Fe-2S]-[ferredoxin] + 2 NH4(+) + 16 ADP + 16 phosphate + 6 H(+). In terms of biological role, the key enzymatic reactions in nitrogen fixation are catalyzed by the nitrogenase complex, which has 2 components: the iron protein and the molybdenum-iron protein. This is Nitrogenase iron protein 1 (nifH1) from Paenibacillus durus (Paenibacillus azotofixans).